The primary structure comprises 301 residues: Probable 5-dehydro-4-deoxyglucarate dehydratase (301 aa).

This sequence belongs to the DapA family.

The catalysed reaction is 5-dehydro-4-deoxy-D-glucarate + H(+) = 2,5-dioxopentanoate + CO2 + H2O. It functions in the pathway carbohydrate acid metabolism; D-glucarate degradation; 2,5-dioxopentanoate from D-glucarate: step 2/2. The chain is Probable 5-dehydro-4-deoxyglucarate dehydratase from Chelativorans sp. (strain BNC1).